The sequence spans 2729 residues: 3-methylorcinaldehyde synthase (2729 aa).

The segment at 99 to 238 is N-terminal acylcarrier protein transacylase domain (SAT); the sequence is LPAALLIPLA…GTISNLTRQL (140 aa). Residues 361 to 373 show a composition bias toward polar residues; it reads SLASTVDINSGNG. The tract at residues 361-391 is disordered; that stretch reads SLASTVDINSGNGKTRRVKPADAQSSANSTH. Residues 397-828 form the Ketosynthase family 3 (KS3) domain; the sequence is DTDIAIVGMS…GSNASAVLVQ (432 aa). Residues Cys571, His706, and His748 each act as for beta-ketoacyl synthase activity in the active site. Residues 942–1230 form a malonyl-CoA:ACP transacylase (MAT) domain region; it reads FGGQVSCFVG…FLEAGTNSSV (289 aa). Catalysis depends on Ser1029, which acts as the For acyl/malonyl transferase activity. Residues 1345 to 1479 form an N-terminal hotdog fold region; that stretch reads ETILTFHSSD…GTVAFKNPGD (135 aa). In terms of domain architecture, PKS/mFAS DH spans 1345–1669; that stretch reads ETILTFHSSD…YVKIARPSME (325 aa). The product template (PT) domain stretch occupies residues 1374–1665; the sequence is KQLLRGHMTL…LGIAYVKIAR (292 aa). The active-site Proton acceptor; for dehydratase activity is the His1380. A C-terminal hotdog fold region spans residues 1513 to 1669; the sequence is DEMLGNQSIY…YVKIARPSME (157 aa). The active-site Proton donor; for dehydratase activity is the Asp1575. A compositionally biased stretch (low complexity) spans 1682 to 1701; that stretch reads AGGKTTPQTATKPAAAPVVA. The tract at residues 1682–1726 is disordered; it reads AGGKTTPQTATKPAAAPVVADHTPRTTESASTVNGVNLDDRKPEG. Residues 1707–1716 show a composition bias toward polar residues; that stretch reads TTESASTVNG. The 75-residue stretch at 1750–1824 folds into the Carrier domain; that stretch reads QDMIARVKAV…GLLQCVAGAL (75 aa). Ser1784 carries the post-translational modification O-(pantetheine 4'-phosphoryl)serine. Low complexity predominate over residues 1835–1868; sequence TLTASSDSGINSAKSSILSGTSTSTSTGTTDTGS. A disordered region spans residues 1835–1874; the sequence is TLTASSDSGINSAKSSILSGTSTSTSTGTTDTGSDVGQSM. The methyltransferase (C-MeT) domain stretch occupies residues 2086–2254; sequence EINPLRIMET…GYVDWTEGMT (169 aa). The segment at 2344 to 2599 is reductase (R) domain; sequence ITGGTGGLGA…GWTPADYVAR (256 aa).

It functions in the pathway secondary metabolite biosynthesis; terpenoid biosynthesis. Functionally, non-reducing polyketide synthase; part of the gene cluster that mediates the biosynthesis of xenovulene A, an unusual meroterpenoid that has potent inhibitory effects on the human gamma-aminobutyrate A (GABAA) benzodiazepine receptor. The first step of xenovulene A biosynthesis is the biosynthesis of 3-methylorcinaldehyde performed by the non-reducing polyketide synthase aspks1. The salicylate hydroxylase asL1 then catalyzes the oxidative dearomatization of 3-methylorcinaldehyde to yield a dearomatized hydroxycyclohexadione. The 2-oxoglutarate-dependent dioxygenase asL3 further catalyzes the oxidative ring expansion to provide the first tropolone metabolite. The cytochrome P450 monooxygenase asR2 allows the synthesis of tropolone hemiacetal. In parallel, a previously unrecognised class of terpene cyclase, asR6, produces alpha-humulene from farnesylpyrophosphate (FPP). The putative Diels-Alderase asR5 probably catalyzes the formation of the tropolone-humulene skeleton by linking humulene and the polyketide moiety. Oxidative-ring contractions catalyzed by asL4 and asL6 then processively remove carbon atoms from the polyketide to yield xenovulene A. The protein is 3-methylorcinaldehyde synthase of Sarocladium schorii (Acremonium strictum (strain IMI 501407)).